Here is a 321-residue protein sequence, read N- to C-terminus: D-alanine--D-alanine ligase (321 aa).

The 195-residue stretch at 121-315 (RSWFLTNNIN…FVNLIEEILK (195 aa)) folds into the ATP-grasp domain. 148–199 (IKRPYVIKPFTQGSSIGVEVIFEEDDFNFANYDFPYGDEVIIEKYIKGRELQ) contributes to the ATP binding site. Residues E268, E282, and N284 each coordinate Mg(2+).

The protein belongs to the D-alanine--D-alanine ligase family. Requires Mg(2+) as cofactor. It depends on Mn(2+) as a cofactor.

The protein resides in the cytoplasm. The catalysed reaction is 2 D-alanine + ATP = D-alanyl-D-alanine + ADP + phosphate + H(+). Its pathway is cell wall biogenesis; peptidoglycan biosynthesis. Cell wall formation. The chain is D-alanine--D-alanine ligase from Rickettsia bellii (strain OSU 85-389).